We begin with the raw amino-acid sequence, 429 residues long: Trigger factor (429 aa).

Residues 164–249 enclose the PPIase FKBP-type domain; the sequence is GDWAVIDHEG…LKALKVRQAP (86 aa).

This sequence belongs to the FKBP-type PPIase family. Tig subfamily.

The protein localises to the cytoplasm. The enzyme catalyses [protein]-peptidylproline (omega=180) = [protein]-peptidylproline (omega=0). In terms of biological role, involved in protein export. Acts as a chaperone by maintaining the newly synthesized protein in an open conformation. Functions as a peptidyl-prolyl cis-trans isomerase. In Anaeromyxobacter dehalogenans (strain 2CP-C), this protein is Trigger factor.